The chain runs to 144 residues: MNFKYIVAVSFLIASAYARSEENEIQSLSQRDVLEEESLREMRGIGTKILGGVKTALKGALKELASTYVNGKRTAEEHEVMKRLETVMRDLDSLDYPEEASERETRGFNQEEIANLFTKKEKRILGPVLGLVSNALGGLLKNIG.

A signal peptide spans methionine 1 to alanine 18. Residues arginine 19–arginine 43 constitute a propeptide that is removed on maturation. Asparagine 70 is subject to Asparagine amide. Residues threonine 74 to arginine 123 constitute a propeptide that is removed on maturation. Residue isoleucine 143 is modified to Isoleucine amide.

It belongs to the bombinin family. In terms of tissue distribution, expressed by the skin glands.

The protein resides in the secreted. Its function is as follows. Maximin-2 shows antibacterial activity against both Gram-positive and Gram-negative bacteria. It also shows antimicrobial activity against the fungus C.albicans, but not against A.flavus nor P.uticale. It has little hemolytic activity. Maximin-H8 shows antimicrobial activity against bacteria and against the fungus C.albicans. Shows strong hemolytic activity. This Bombina maxima (Giant fire-bellied toad) protein is Maximins 2/H8 type 1.